Here is a 342-residue protein sequence, read N- to C-terminus: Pre-mRNA-splicing factor 18 (342 aa).

The protein belongs to the PRP18 family. As to quaternary structure, interacts with the spliceosome. Part of a complex containing U4/U6 snRNPs.

It is found in the nucleus speckle. Its function is as follows. Participates in the second step of pre-mRNA splicing. This Xenopus laevis (African clawed frog) protein is Pre-mRNA-splicing factor 18 (prpf18).